Consider the following 156-residue polypeptide: Flagellar assembly factor FliW (156 aa).

It belongs to the FliW family. In terms of assembly, interacts with translational regulator CsrA and flagellin(s).

It localises to the cytoplasm. Its function is as follows. Acts as an anti-CsrA protein, binds CsrA and prevents it from repressing translation of its target genes, one of which is flagellin. Binds to flagellin and participates in the assembly of the flagellum. This is Flagellar assembly factor FliW from Pseudothermotoga lettingae (strain ATCC BAA-301 / DSM 14385 / NBRC 107922 / TMO) (Thermotoga lettingae).